Consider the following 255-residue polypeptide: MNALVAHNSKAWDKKVETGNEWTVAVEQQVIEQAKKGNWDIRVTPMKDVPKDWFPPIKGLKVLCLASGGGQQGPVLAAAGADVTVLDNSEKQLNQDRMIAERDGLTIHTVKGSMDDLSVFNDESFDVIVHPVANVFVENVLPVWKEAYRVLKRNGILISGFVNPVVFLFDTELEQQGVLKVKHSIPYADPEDLPKHKVKKLIENNEALEFGHSLEDQIKGQIDAGFIVTGFYEDKGGFVLDQYIHTYSATRSVKV.

This sequence belongs to the methyltransferase superfamily.

This is an uncharacterized protein from Bacillus subtilis (strain 168).